The following is a 347-amino-acid chain: GMP reductase (347 aa).

108 to 131 (AEFEKVKKIMALSEEFVFICIDIA) is a binding site for NADP(+). The K(+) site is built by glycine 181 and glycine 183. The active-site Thioimidate intermediate is the cysteine 186. 216-239 (IIGDGGCSCAGDVSKAFGGGADFV) serves as a coordination point for NADP(+).

Belongs to the IMPDH/GMPR family. GuaC type 1 subfamily. In terms of assembly, homotetramer.

The catalysed reaction is IMP + NH4(+) + NADP(+) = GMP + NADPH + 2 H(+). Catalyzes the irreversible NADPH-dependent deamination of GMP to IMP. It functions in the conversion of nucleobase, nucleoside and nucleotide derivatives of G to A nucleotides, and in maintaining the intracellular balance of A and G nucleotides. The protein is GMP reductase of Vibrio atlanticus (strain LGP32) (Vibrio splendidus (strain Mel32)).